The chain runs to 896 residues: Phycobiliprotein ApcE (896 aa).

Residue C190 coordinates (2R,3E)-phycocyanobilin. PBS-linker domains follow at residues 247 to 427, 508 to 684, and 703 to 881; these read DIQG…FRKV, LGAK…QRVD, and EPEI…KQDK.

It belongs to the phycobilisome linker protein family. In terms of assembly, heterodimer of ApcF (a variant beta-allophycocyanin). Phycobilisomes of this organism are composed of a two cylinder core, from which six rods radiate. The core is mainly composed of allophycocyanin alpha and beta chains and of minor components. Contains one covalently linked bilin chromophore. This protein autochromophorylates.

It is found in the cellular thylakoid membrane. In terms of biological role, this protein is postulated to act both as terminal energy acceptor (by its phycobilin-like domains) and as a linker polypeptide (by its repeats and arms) that stabilizes the phycobilisome core architecture. Has intrinsic bilin lyase activity. This is Phycobiliprotein ApcE (apcE) from Synechocystis sp. (strain ATCC 27184 / PCC 6803 / Kazusa).